The primary structure comprises 138 residues: Augmin complex subunit msd1 (138 aa).

In terms of assembly, component of the augmin complex composed of dgt2, dgt3, dgt4, dgt5, dgt6, msd1, msd5 and wac. The complex interacts directly or indirectly with microtubules and is required for centrosome-independent generation of spindle microtubules.

Its subcellular location is the cytoplasm. It is found in the cytoskeleton. The protein resides in the spindle. In terms of biological role, as part of the augmin complex, plays a role in centrosome-independent generation of spindle microtubules. The complex is required for mitotic spindle assembly through its involvement in localizing gamma-tubulin to spindle microtubules. msd1 is required for microtubule nucleation from within the mitotic spindle and for localization of Grip71 to centrosomes and mitotic spindle. This chain is Augmin complex subunit msd1, found in Drosophila melanogaster (Fruit fly).